The chain runs to 485 residues: Glutamate--tRNA ligase 2 (485 aa).

Residues 10-20 (PSPTGPIHIGN) carry the 'HIGH' region motif. The 'KMSKS' region signature appears at 252 to 256 (KLSKR). K255 serves as a coordination point for ATP.

This sequence belongs to the class-I aminoacyl-tRNA synthetase family. Glutamate--tRNA ligase type 1 subfamily. As to quaternary structure, monomer.

Its subcellular location is the cytoplasm. It carries out the reaction tRNA(Glu) + L-glutamate + ATP = L-glutamyl-tRNA(Glu) + AMP + diphosphate. Catalyzes the attachment of glutamate to tRNA(Glu) in a two-step reaction: glutamate is first activated by ATP to form Glu-AMP and then transferred to the acceptor end of tRNA(Glu). This chain is Glutamate--tRNA ligase 2, found in Caldanaerobacter subterraneus subsp. tengcongensis (strain DSM 15242 / JCM 11007 / NBRC 100824 / MB4) (Thermoanaerobacter tengcongensis).